We begin with the raw amino-acid sequence, 459 residues long: tRNA-2-methylthio-N(6)-dimethylallyladenosine synthase (459 aa).

In terms of domain architecture, MTTase N-terminal spans 1-116; that stretch reads MRAHLITYGC…IGKALETNER (116 aa). Residues C10, C46, C79, C148, C152, and C155 each coordinate [4Fe-4S] cluster. In terms of domain architecture, Radical SAM core spans 134–367; that stretch reads PQGKLQAHLT…IAKQKEWSAR (234 aa). Residues 370–433 form the TRAM domain; sequence AAKVGTIQEV…PHMLYGRLIG (64 aa).

Belongs to the methylthiotransferase family. MiaB subfamily. Monomer. It depends on [4Fe-4S] cluster as a cofactor.

It localises to the cytoplasm. The catalysed reaction is N(6)-dimethylallyladenosine(37) in tRNA + (sulfur carrier)-SH + AH2 + 2 S-adenosyl-L-methionine = 2-methylsulfanyl-N(6)-dimethylallyladenosine(37) in tRNA + (sulfur carrier)-H + 5'-deoxyadenosine + L-methionine + A + S-adenosyl-L-homocysteine + 2 H(+). In terms of biological role, catalyzes the methylthiolation of N6-(dimethylallyl)adenosine (i(6)A), leading to the formation of 2-methylthio-N6-(dimethylallyl)adenosine (ms(2)i(6)A) at position 37 in tRNAs that read codons beginning with uridine. The sequence is that of tRNA-2-methylthio-N(6)-dimethylallyladenosine synthase from Deinococcus geothermalis (strain DSM 11300 / CIP 105573 / AG-3a).